Here is a 202-residue protein sequence, read N- to C-terminus: Probable chemoreceptor glutamine deamidase CheD (202 aa).

Belongs to the CheD family.

It carries out the reaction L-glutaminyl-[protein] + H2O = L-glutamyl-[protein] + NH4(+). Functionally, probably deamidates glutamine residues to glutamate on methyl-accepting chemotaxis receptors (MCPs), playing an important role in chemotaxis. The chain is Probable chemoreceptor glutamine deamidase CheD from Thiobacillus denitrificans (strain ATCC 25259 / T1).